Reading from the N-terminus, the 311-residue chain is MPLRIIFMGTPEFSVPTLLALAGAGHEIAAVYTQPPRPGGRRGLDLQKSPVHQAAERLDIPVLTPVNFKEAADRRTFRNFGADAAVVVAYGLLLPEEILSGTRCGCYNGHASLLPRWRGAAPIQRAIMAGDRETGMMVMKMDKGLDTGPVALARSVPIHATMTAGELHDRLSEVGAKLMTEAMARLEAGELPLTPQPQEGVVYAAKISKEETRIDFSRPAAEVHNHIRGLSPFPGAWFELDIAGRRERIKVLGSEISQGEGAPGQVLDGSLAIACGEGAVRLTRLQRAGGKALPAADFLRGTPIVASAGIG.

(6S)-5,6,7,8-tetrahydrofolate is bound at residue 112-115 (SLLP).

It belongs to the Fmt family.

It catalyses the reaction L-methionyl-tRNA(fMet) + (6R)-10-formyltetrahydrofolate = N-formyl-L-methionyl-tRNA(fMet) + (6S)-5,6,7,8-tetrahydrofolate + H(+). Functionally, attaches a formyl group to the free amino group of methionyl-tRNA(fMet). The formyl group appears to play a dual role in the initiator identity of N-formylmethionyl-tRNA by promoting its recognition by IF2 and preventing the misappropriation of this tRNA by the elongation apparatus. This Sinorhizobium medicae (strain WSM419) (Ensifer medicae) protein is Methionyl-tRNA formyltransferase.